Reading from the N-terminus, the 910-residue chain is Triacylglycerol lipase 4 (910 aa).

Residues 51–66 show a composition bias toward basic and acidic residues; the sequence is SKDNSDVERVEEDAGK. The interval 51–120 is disordered; sequence SKDNSDVERV…TDEGEDERQG (70 aa). Ser-55 bears the Phosphoserine mark. Positions 70–85 are enriched in polar residues; sequence TGKNKTTNKVNFNLDT. Residues 90–116 are compositionally biased toward acidic residues; it reads KLDDDQETVTENENNDIEMVETDEGED. Positions 282-483 constitute a PNPLA domain; that stretch reads LVLSGGGTFG…DNDLPISRLS (202 aa). The GXGXXG motif lies at 286-291; it reads GGGTFG. The short motif at 313-317 is the GXSXG element; that stretch reads GSSAG. Catalysis depends on Ser-315, which acts as the Nucleophile. Asp-470 serves as the catalytic Proton acceptor. 2 disordered regions span residues 657–683 and 713–777; these read EQTSDESKNPENSTLLTRTPTKGDNHI and SPSG…PILQ. Residues 666 to 683 show a composition bias toward polar residues; sequence PENSTLLTRTPTKGDNHI. Thr-675 is modified (phosphothreonine; by Cdk1). Phosphoserine is present on residues Ser-737, Ser-749, Ser-751, and Ser-836. Residues 739–768 show a composition bias toward polar residues; sequence TISTSRRPAKSFSFSVASPTSRMLRQSSKI. The tract at residues 874 to 910 is disordered; it reads RRHSIDGRPPSQATKSSPFRSRPSSSTQHKSTTSFTQ. Residues 889-899 are compositionally biased toward low complexity; sequence SSPFRSRPSSS. Position 890 is a phosphoserine; by Cdk1 (Ser-890). Over residues 900–910 the composition is skewed to polar residues; the sequence is TQHKSTTSFTQ.

In terms of processing, phosphorylation at Thr-675 and Ser-890 by Cdk1/CDC28 stimulates enzyme activity in vivo.

It localises to the lipid droplet. The enzyme catalyses a triacylglycerol + H2O = a diacylglycerol + a fatty acid + H(+). The catalysed reaction is 1,2,3-tri-(9Z-octadecenoyl)-glycerol + H2O = di-(9Z)-octadecenoylglycerol + (9Z)-octadecenoate + H(+). It catalyses the reaction 1,2-dihexadecanoyl-sn-glycero-3-phosphocholine + H2O = 1-hexadecanoyl-sn-glycero-3-phosphocholine + hexadecanoate + H(+). It carries out the reaction cholesteryl (9Z-octadecenoate) + H2O = cholesterol + (9Z)-octadecenoate + H(+). The enzyme catalyses 1-(9Z-octadecenoyl)-sn-glycero-3-phosphate + (9Z)-octadecenoyl-CoA = 1,2-di-(9Z-octadecenoyl)-sn-glycero-3-phosphate + CoA. Its activity is regulated as follows. Phosphorylated and activated by cyclin-dependent kinase 1 (Cdk1/CDC28). Loses its lipolytic activity in cells lacking nonpolar lipids, but retains its side activity as lysophospholipid acyltransferase. In terms of biological role, lipid particle-localized triacylglycerol (TAG) lipase. The lipid droplet/particle is a lipid storage compartment which serves as a depot of energy and building blocks for membrane lipid biosynthesis. Involved in the mobilization of the non-polar storage lipids triacylglycerols (TAGs) from lipid particles by hydrolysis of TAGs, releasing and supplying specific fatty acids to the appropriate metabolic pathways. Also has steryl ester (SE) hydrolase and phospholipase A(2) (PLA(2)) activities, and catalyzes the acylation of lysophosphatidic acid (LPA). Contributes to early bud formation in late G1 phase of the cell cycle upon phosphorylation and activation by cyclin-dependent kinase 1 (Cdk1/CDC28). This Saccharomyces cerevisiae (strain ATCC 204508 / S288c) (Baker's yeast) protein is Triacylglycerol lipase 4 (TGL4).